The primary structure comprises 245 residues: MSDYKSLKVAELREKLAEKGLSTAGNKAELVSRLTAATESNDENTSNNNATDLGDLAPPEDDIDWGDMENDTISTDVNKPAEPESKETSAPAAAVEIEKENESIISKETSQAPETSTGAEEHQETTEESKQSVSNEVSSPDVAKEQEKLIQRAKRFGIPVDDEQIKKAARAARFGIQQPLASSNNKNHNQSKNPQNRSNSRSKQRNKNAPPKSAPSKRKSNILDDPIEAEKARKRAERFGVAAKN.

Residues 4-38 (YKSLKVAELREKLAEKGLSTAGNKAELVSRLTAAT) form the SAP domain. The tract at residues 32–245 (SRLTAATESN…AERFGVAAKN (214 aa)) is disordered. Residues 37 to 52 (ATESNDENTSNNNATD) are compositionally biased toward low complexity. Acidic residues predominate over residues 58 to 70 (PPEDDIDWGDMEN). A compositionally biased stretch (polar residues) spans 109 to 118 (TSQAPETSTG). Residues 119–130 (AEEHQETTEESK) are compositionally biased toward basic and acidic residues. Ser-139 carries the post-translational modification Phosphoserine. Residues 182-196 (SSNNKNHNQSKNPQN) are compositionally biased toward low complexity.

Belongs to the SAP domain-containing ribonucleoprotein family.

The sequence is that of Protein mlo1 (mlo1) from Schizosaccharomyces pombe (strain 972 / ATCC 24843) (Fission yeast).